We begin with the raw amino-acid sequence, 143 residues long: uncharacterized protein (143 aa).

An HTH marR-type domain is found at 11–139; it reads EYELTTFIRR…FGELLQRMNK (129 aa). The H-T-H motif DNA-binding region spans 53–76; sequence VKELAESFKLDISTLSRQAAALEA.

This is an uncharacterized protein from Bacillus subtilis (strain 168).